Here is a 481-residue protein sequence, read N- to C-terminus: GTPase Obg (481 aa).

An Obg domain is found at 2–159 (TTFVDRVVLH…LDAVLELKSV (158 aa)). One can recognise an OBG-type G domain in the interval 160–330 (ADIGLVGYPS…LMFAMGELVA (171 aa)). GTP is bound by residues 166-173 (GYPSAGKS), 191-195 (FTTLV), 212-215 (DVPG), 282-285 (NKID), and 311-313 (SAA). Mg(2+)-binding residues include S173 and T193. The region spanning 348–426 (PKAVDDAGFT…IGEREFDWHP (79 aa)) is the OCT domain. Positions 440–481 (DQRLAEKTQRPSAAERLAARKARRQRPGDEPESDELDGDSGE) are disordered. A compositionally biased stretch (acidic residues) spans 469 to 481 (EPESDELDGDSGE).

It belongs to the TRAFAC class OBG-HflX-like GTPase superfamily. OBG GTPase family. As to quaternary structure, monomer. It depends on Mg(2+) as a cofactor.

It is found in the cytoplasm. An essential GTPase which binds GTP, GDP and possibly (p)ppGpp with moderate affinity, with high nucleotide exchange rates and a fairly low GTP hydrolysis rate. Plays a role in control of the cell cycle, stress response, ribosome biogenesis and in those bacteria that undergo differentiation, in morphogenesis control. This Salinispora arenicola (strain CNS-205) protein is GTPase Obg.